We begin with the raw amino-acid sequence, 66 residues long: UPF0150 protein AF_0072.1 (66 aa).

The protein belongs to the UPF0150 family.

The protein is UPF0150 protein AF_0072.1 of Archaeoglobus fulgidus (strain ATCC 49558 / DSM 4304 / JCM 9628 / NBRC 100126 / VC-16).